The chain runs to 672 residues: MKKPKLSKVEKIDKIDLFSSLWKQRSVRVIMAIGFLYLVIVSVEIPLVFKSWSSSSVPLDALSRLEKLNNEQEPQVEIIPNPPLEPVSYPVSNPTIVTRTDLVQNKVREHHRGVLSSLRFDSETFDPSSKDGSVELHKSAKEAWQLGRKLWKELESGRLEKLVEKPEKNKPDSCPHSVSLTGSEFMNRENKLMELPCGLTLGSHITLVGRPRKAHPKEGDWSKLVSQFVIELQGLKTVEGEDPPRILHFNPRLKGDWSKKPVIEQNSCYRMQWGPAQRCEGWKSRDDEETVDSHVKCEKWIRDDDNYSEGSRARWWLNRLIGRRKRVKVEWPFPFVEEKLFVLTLSAGLEGYHINVDGKHVTSFPYRTGFTLEDATGLTVNGDIDVHSVFVASLPTSHPSFAPQRHLELSKRWQAPVVPDGPVEIFIGILSAGNHFSERMAVRKSWMQHVLITSAKVVARFFVALHGRKEVNVELKKEAEYFGDIVLVPYMDSYDLVVLKTVAICEHGALAFSAKYIMKCDDDTFVKLGAVINEVKKVPEGRSLYIGNMNYYHKPLRGGKWAVTYEEWPEEDYPPYANGPGYVLSSDIARFIVDKFERHKLRLFKMEDVSVGMWVEHFKNTTNPVDYRHSLRFCQFGCVENYYTAHYQSPRQMICLWDKLLRQNKPECCNMR.

The Cytoplasmic segment spans residues 1-28 (MKKPKLSKVEKIDKIDLFSSLWKQRSVR). A helical; Signal-anchor for type II membrane protein membrane pass occupies residues 29-49 (VIMAIGFLYLVIVSVEIPLVF). At 50-672 (KSWSSSSVPL…QNKPECCNMR (623 aa)) the chain is on the lumenal side. One can recognise a Galectin domain in the interval 191–392 (KLMELPCGLT…DIDVHSVFVA (202 aa)). Residues Asn-306 and Asn-620 are each glycosylated (N-linked (GlcNAc...) asparagine).

It belongs to the glycosyltransferase 31 family. Requires Mn(2+) as cofactor. As to expression, expressed in juvenile leaves, stems, cauline leaves and siliques.

It is found in the golgi apparatus membrane. Its pathway is protein modification; protein glycosylation. Functionally, possesses hydroxyproline O-galactosyltransferase activity. Transfers galactose from UDP-galactose to hydroxyproline residues in the arabinogalactan proteins (AGPs). Is specific for AGPs containing non-contiguous peptidyl hydroxyproline residues. Utilizes UDP-galactose solely as sugar donor. The addition of galactose onto the peptidyl hydroxyproline residues in AGP core proteins represents the first committed step in arabinogalactan polysaccharide addition. AGP glycans play essential roles in both vegetative and reproductive plant growth. The protein is Hydroxyproline O-galactosyltransferase GALT5 of Arabidopsis thaliana (Mouse-ear cress).